A 464-amino-acid chain; its full sequence is Asparagine--tRNA ligase (464 aa).

Belongs to the class-II aminoacyl-tRNA synthetase family. In terms of assembly, homodimer.

It localises to the cytoplasm. It carries out the reaction tRNA(Asn) + L-asparagine + ATP = L-asparaginyl-tRNA(Asn) + AMP + diphosphate + H(+). The polypeptide is Asparagine--tRNA ligase (Xanthomonas campestris pv. campestris (strain 8004)).